The sequence spans 230 residues: Cytochrome c oxidase subunit 2 (230 aa).

Residues 1–14 are Mitochondrial intermembrane-facing; it reads MAHPTQLGFQDAAS. A helical membrane pass occupies residues 15-45; that stretch reads PVMEELLHFHDHALMIVFLISALVLYVIITT. At 46–59 the chain is on the mitochondrial matrix side; that stretch reads VSTKLTNMYILDSQ. Residues 60–87 form a helical membrane-spanning segment; sequence EIEIVWTVLPALILILIALPSLRILYLM. Topologically, residues 88–230 are mitochondrial intermembrane; sequence DEINDPHLTI…NWSTLMLKDA (143 aa). Residues His161, Cys196, Glu198, Cys200, His204, and Met207 each contribute to the Cu cation site. Glu198 contributes to the Mg(2+) binding site.

It belongs to the cytochrome c oxidase subunit 2 family. As to quaternary structure, component of the cytochrome c oxidase (complex IV, CIV), a multisubunit enzyme composed of 14 subunits. The complex is composed of a catalytic core of 3 subunits MT-CO1, MT-CO2 and MT-CO3, encoded in the mitochondrial DNA, and 11 supernumerary subunits COX4I, COX5A, COX5B, COX6A, COX6B, COX6C, COX7A, COX7B, COX7C, COX8 and NDUFA4, which are encoded in the nuclear genome. The complex exists as a monomer or a dimer and forms supercomplexes (SCs) in the inner mitochondrial membrane with NADH-ubiquinone oxidoreductase (complex I, CI) and ubiquinol-cytochrome c oxidoreductase (cytochrome b-c1 complex, complex III, CIII), resulting in different assemblies (supercomplex SCI(1)III(2)IV(1) and megacomplex MCI(2)III(2)IV(2)). Found in a complex with TMEM177, COA6, COX18, COX20, SCO1 and SCO2. Interacts with TMEM177 in a COX20-dependent manner. Interacts with COX20. Interacts with COX16. Requires Cu cation as cofactor.

The protein resides in the mitochondrion inner membrane. It carries out the reaction 4 Fe(II)-[cytochrome c] + O2 + 8 H(+)(in) = 4 Fe(III)-[cytochrome c] + 2 H2O + 4 H(+)(out). In terms of biological role, component of the cytochrome c oxidase, the last enzyme in the mitochondrial electron transport chain which drives oxidative phosphorylation. The respiratory chain contains 3 multisubunit complexes succinate dehydrogenase (complex II, CII), ubiquinol-cytochrome c oxidoreductase (cytochrome b-c1 complex, complex III, CIII) and cytochrome c oxidase (complex IV, CIV), that cooperate to transfer electrons derived from NADH and succinate to molecular oxygen, creating an electrochemical gradient over the inner membrane that drives transmembrane transport and the ATP synthase. Cytochrome c oxidase is the component of the respiratory chain that catalyzes the reduction of oxygen to water. Electrons originating from reduced cytochrome c in the intermembrane space (IMS) are transferred via the dinuclear copper A center (CU(A)) of subunit 2 and heme A of subunit 1 to the active site in subunit 1, a binuclear center (BNC) formed by heme A3 and copper B (CU(B)). The BNC reduces molecular oxygen to 2 water molecules using 4 electrons from cytochrome c in the IMS and 4 protons from the mitochondrial matrix. The polypeptide is Cytochrome c oxidase subunit 2 (mt-co2) (Formosania lacustris (Oriental stream loach)).